Reading from the N-terminus, the 173-residue chain is Co-chaperone protein HscB (173 aa).

In terms of domain architecture, J spans 2–74 (DYFTLFGLPA…LKRAEYMLSQ (73 aa)).

This sequence belongs to the HscB family. As to quaternary structure, interacts with HscA and stimulates its ATPase activity. Interacts with IscU.

In terms of biological role, co-chaperone involved in the maturation of iron-sulfur cluster-containing proteins. Seems to help targeting proteins to be folded toward HscA. This chain is Co-chaperone protein HscB, found in Xenorhabdus nematophila (strain ATCC 19061 / DSM 3370 / CCUG 14189 / LMG 1036 / NCIMB 9965 / AN6).